Reading from the N-terminus, the 567-residue chain is Sensor histidine kinase MtrB (567 aa).

Residues 1 to 15 (MIFGSRRRIRGRRGR) are compositionally biased toward basic residues. Residues 1–20 (MIFGSRRRIRGRRGRSGPMT) form a disordered region. A run of 2 helical transmembrane segments spans residues 42 to 62 (VVAL…FVLT) and 213 to 233 (GTMA…ALLV). The region spanning 235 to 287 (RQVVVPVRSASRIAERFAEGHLSERMPVRGEDDMARLAVSFNDMAESLSRQIA) is the HAMP domain. The 218-residue stretch at 302–519 (DVSHELRTPL…CFRLTLPLVR (218 aa)) folds into the Histidine kinase domain. His305 is subject to Phosphohistidine; by autocatalysis. Residues 526–567 (SPLPMKPIPQPVLQPVAQPNPQPMPPEYKERQRPREHAEWSG) are disordered. A compositionally biased stretch (pro residues) spans 529–551 (PMKPIPQPVLQPVAQPNPQPMPP). A compositionally biased stretch (basic and acidic residues) spans 552-567 (EYKERQRPREHAEWSG).

The protein resides in the cell membrane. The catalysed reaction is ATP + protein L-histidine = ADP + protein N-phospho-L-histidine.. Functionally, member of the two-component regulatory system MtrA/MtrB. Seems to function as a membrane-associated protein kinase that phosphorylates MtrA in response to environmental signals. The polypeptide is Sensor histidine kinase MtrB (mtrB) (Mycobacterium bovis (strain ATCC BAA-935 / AF2122/97)).